The primary structure comprises 578 residues: MRPWTGSWRWIMLILFAWGTLLFYIGGHLVRDNENPDHSSRELSKILAKLERLKQQNEDLRRMAESLRIPEGPIEQGAAAGRIRALEEQLLKAKEQIEMYKQQSSNAVSGLGKDHEILRRAIENGAKEFWYFVQSEVKKLKHLDRNELQRHVDEIIIDMGHQQRSVMTDLYYLSQTDGAGDWREREAKDLTDLVQRRITYLQNPKDCSKAKKLVCNINKGCGYGCQLHHVVYCFMIAYGTQRTLILESQSWRYATGGWETVFKPVSETCTDRSGSSTGHWSGEANDKNVQVVELPIVDSLHPRPPYLPLGVPEDLADRLIRLHGDPAVWWVSQFVKYLIRPQPWLEKEIEESTKKLGFKHPVIGVHVRRTDKVGTEAAFHPIEEYMVHVEEHFQLLARRMQIDKKRVYLATDDPTLLQEAKAKYPQYEFISDNSISWSAGLHNRYTENSLRGVILDIHFLSQADFLVCTFSSQVCRVAYEIMQTLHPDASAHFHSLDDIYYFGGQNAHNQLAIYPHQPRNAEEIPLEPGDIIGVAGNHWDGYSKGINRKLGRTGLYPSYKVKEKIETVKYPTYQEAEK.

Over 1-9 the chain is Cytoplasmic; sequence MRPWTGSWR. Residues 10–30 traverse the membrane as a helical; Signal-anchor for type II membrane protein segment; sequence WIMLILFAWGTLLFYIGGHLV. Topologically, residues 31–578 are lumenal; the sequence is RDNENPDHSS…KYPTYQEAEK (548 aa). Disulfide bonds link Cys207–Cys269, Cys215–Cys233, and Cys221–Cys225. One can recognise a GT23 domain in the interval 209 to 496; sequence KAKKLVCNIN…PDASAHFHSL (288 aa). An SH3-binding motif is present at residues 302–308; the sequence is PRPPYLP. An important for donor substrate binding region spans residues 368–369; sequence RR. An intrachain disulfide couples Cys468 to Cys475. Residues 505–566 enclose the SH3 domain; it reads QNAHNQLAIY…PSYKVKEKIE (62 aa).

The protein belongs to the glycosyltransferase 23 family.

Its subcellular location is the golgi apparatus. It localises to the golgi stack membrane. It carries out the reaction N(4)-{beta-D-GlcNAc-(1-&gt;2)-alpha-D-Man-(1-&gt;3)-[beta-D-GlcNAc-(1-&gt;2)-alpha-D-Man-(1-&gt;6)]-beta-D-Man-(1-&gt;4)-beta-D-GlcNAc-(1-&gt;4)-beta-D-GlcNAc}-L-asparaginyl-[protein] + GDP-beta-L-fucose = an N(4)-{beta-D-GlcNAc-(1-&gt;2)-alpha-D-Man-(1-&gt;3)-[beta-D-GlcNAc-(1-&gt;2)-alpha-D-Man-(1-&gt;6)]-beta-D-Man-(1-&gt;4)-beta-D-GlcNAc-(1-&gt;4)-[alpha-L-Fuc-(1-&gt;6)]-beta-D-GlcNAc}-L-asparaginyl-[protein] + GDP + H(+). Its pathway is protein modification; protein glycosylation. In terms of biological role, catalyzes the addition of fucose in alpha 1-6 linkage to the first GlcNAc residue, next to the peptide chains in N-glycans. In Xenopus tropicalis (Western clawed frog), this protein is Alpha-(1,6)-fucosyltransferase (fut8).